We begin with the raw amino-acid sequence, 513 residues long: GMP synthase [glutamine-hydrolyzing] (513 aa).

One can recognise a Glutamine amidotransferase type-1 domain in the interval Met8–Glu198. Cys85 (nucleophile) is an active-site residue. Active-site residues include His172 and Glu174. One can recognise a GMPS ATP-PPase domain in the interval Trp199–Arg388. Gly227–Val233 is a binding site for ATP.

Homodimer.

The catalysed reaction is XMP + L-glutamine + ATP + H2O = GMP + L-glutamate + AMP + diphosphate + 2 H(+). Its pathway is purine metabolism; GMP biosynthesis; GMP from XMP (L-Gln route): step 1/1. In terms of biological role, catalyzes the synthesis of GMP from XMP. This chain is GMP synthase [glutamine-hydrolyzing] (guaA), found in Bacillus subtilis (strain 168).